The primary structure comprises 70 residues: Small ribosomal subunit protein bS21 (70 aa).

The segment covering 48–61 (KLAAAVKRQSKRLR) has biased composition (basic residues). A disordered region spans residues 48 to 70 (KLAAAVKRQSKRLRSQQLPPKMY).

The protein belongs to the bacterial ribosomal protein bS21 family.

The chain is Small ribosomal subunit protein bS21 from Thiobacillus denitrificans (strain ATCC 25259 / T1).